The sequence spans 159 residues: 2-C-methyl-D-erythritol 2,4-cyclodiphosphate synthase (159 aa).

Asp-10 and His-12 together coordinate a divalent metal cation. 4-CDP-2-C-methyl-D-erythritol 2-phosphate contacts are provided by residues Asp-10–His-12 and His-36–Ser-37. A divalent metal cation is bound at residue His-44. 4-CDP-2-C-methyl-D-erythritol 2-phosphate contacts are provided by residues Asp-58–Gly-60, Phe-63–Asp-67, Thr-134–Glu-137, and Arg-144.

Belongs to the IspF family. Homotrimer. It depends on a divalent metal cation as a cofactor.

It carries out the reaction 4-CDP-2-C-methyl-D-erythritol 2-phosphate = 2-C-methyl-D-erythritol 2,4-cyclic diphosphate + CMP. It functions in the pathway isoprenoid biosynthesis; isopentenyl diphosphate biosynthesis via DXP pathway; isopentenyl diphosphate from 1-deoxy-D-xylulose 5-phosphate: step 4/6. Functionally, involved in the biosynthesis of isopentenyl diphosphate (IPP) and dimethylallyl diphosphate (DMAPP), two major building blocks of isoprenoid compounds. Catalyzes the conversion of 4-diphosphocytidyl-2-C-methyl-D-erythritol 2-phosphate (CDP-ME2P) to 2-C-methyl-D-erythritol 2,4-cyclodiphosphate (ME-CPP) with a corresponding release of cytidine 5-monophosphate (CMP). In Cytophaga hutchinsonii (strain ATCC 33406 / DSM 1761 / CIP 103989 / NBRC 15051 / NCIMB 9469 / D465), this protein is 2-C-methyl-D-erythritol 2,4-cyclodiphosphate synthase.